A 149-amino-acid polypeptide reads, in one-letter code: Stathmin (149 aa).

A2 carries the post-translational modification N-acetylalanine. S4 bears the Phosphoserine mark. Positions 4–145 (SDIQVKELEK…NKESKDPADE (142 aa)) constitute an SLD domain. N6-acetyllysine is present on K9. A Phosphoserine modification is found at S16. The residue at position 25 (S25) is a Phosphoserine; by CDK1, MAPK1 and MAPK3. K29 carries the post-translational modification N6-methyllysine. Phosphoserine is present on S31. S38 is modified (phosphoserine; by CDK1, MAPK1 and MAPK3). The stretch at 41–140 (KKKDLSLEEI…EEVRKNKESK (100 aa)) forms a coiled coil. S63 is modified (phosphoserine; by PKA). 2 positions are modified to N6-acetyllysine: K100 and K119. A compositionally biased stretch (basic and acidic residues) spans 121 to 143 (ERLREKDKHIEEVRKNKESKDPA). A disordered region spans residues 121 to 149 (ERLREKDKHIEEVRKNKESKDPADETEAD).

Belongs to the stathmin family. In terms of assembly, binds to two alpha/beta-tubulin heterodimers. Interacts with KIST. Many different phosphorylated forms are observed depending on specific combinations among the sites which can be phosphorylated. MAPK is responsible for the phosphorylation of stathmin in response to NGF. Phosphorylation at Ser-16 seems to be required for neuron polarization.

The protein resides in the cytoplasm. Its subcellular location is the cytoskeleton. In terms of biological role, involved in the regulation of the microtubule (MT) filament system by destabilizing microtubules. Prevents assembly and promotes disassembly of microtubules. Its phosphorylation at Ser-16 may be required for axon formation during neurogenesis. Involved in the control of the learned and innate fear. The protein is Stathmin (STMN1) of Bos taurus (Bovine).